The chain runs to 224 residues: Charged multivesicular body protein 4b (224 aa).

The interval 1–23 (MSVFGKLFGAGGGKAGKGGPTPQ) is disordered. An N-acetylserine modification is found at serine 2. Residue lysine 6 is modified to N6-acetyllysine. Residues 8–19 (FGAGGGKAGKGG) are compositionally biased toward gly residues. Positions 23 to 183 (QEAIQRLRDT…EELDKNLLEI (161 aa)) form a coiled coil. Lysine 114 carries the N6-acetyllysine modification. Phosphoserine occurs at positions 184 and 223. The segment at 185–224 (GPETVPLPNVPSIALPSKPAKKKEEEDDDMKELENWAGSM) is disordered.

It belongs to the SNF7 family. As to quaternary structure, probable core component of the endosomal sorting required for transport complex III (ESCRT-III). ESCRT-III components are thought to multimerize to form a flat lattice on the perimeter membrane of the endosome. Several assembly forms of ESCRT-III may exist that interact and act sequentially. Interacts with CHMP6 and CHMP4C. Interacts with PDCD6IP; the interaction is direct. Interacts with VPS4A; the interaction is direct. Interacts with VPS4B; the interaction is direct. Interacts with CHMP7. Interacts with CFTR; the interaction requires misfolded CFTR. Interacts with PTPN23. Interacts with CC2D1B. In terms of processing, ISGylated. Isgylation weakens its interaction with VPS4A. In terms of tissue distribution, widely expressed. Expressed at higher level in heart and skeletal muscle. Also expressed in brain, colon, thymus, spleen, kidney, liver, small intestine, placenta, lung and peripheral blood lymphocytes.

The protein resides in the cytoplasm. It localises to the cytosol. The protein localises to the late endosome membrane. It is found in the midbody. Its subcellular location is the nucleus envelope. Functionally, probable core component of the endosomal sorting required for transport complex III (ESCRT-III) which is involved in multivesicular bodies (MVBs) formation and sorting of endosomal cargo proteins into MVBs. MVBs contain intraluminal vesicles (ILVs) that are generated by invagination and scission from the limiting membrane of the endosome and mostly are delivered to lysosomes enabling degradation of membrane proteins, such as stimulated growth factor receptors, lysosomal enzymes and lipids. The MVB pathway appears to require the sequential function of ESCRT-O, -I,-II and -III complexes. ESCRT-III proteins mostly dissociate from the invaginating membrane before the ILV is released. The ESCRT machinery also functions in topologically equivalent membrane fission events, such as the terminal stages of cytokinesis. Together with SPAST, the ESCRT-III complex promotes nuclear envelope sealing and mitotic spindle disassembly during late anaphase. Plays a role in the endosomal sorting pathway. ESCRT-III proteins are believed to mediate the necessary vesicle extrusion and/or membrane fission activities, possibly in conjunction with the AAA ATPase VPS4. When overexpressed, membrane-assembled circular arrays of CHMP4B filaments can promote or stabilize negative curvature and outward budding. CHMP4A/B/C are required for the exosomal release of SDCBP, CD63 and syndecan. Majority of the protein exists in a folded closed conformation. Its function is as follows. (Microbial infection) The ESCRT machinery also functions in topologically equivalent membrane fission events, such as the budding of enveloped viruses (HIV-1 and other lentiviruses). Via its interaction with PDCD6IP involved in HIV-1 p6- and p9-dependent virus release. This is Charged multivesicular body protein 4b (CHMP4B) from Homo sapiens (Human).